The following is a 153-amino-acid chain: Large ribosomal subunit protein uL15 (153 aa).

A disordered region spans residues 21 to 42 (RGIGSGKGKTGGRGIKGQKSRS). Gly residues predominate over residues 23 to 35 (IGSGKGKTGGRGI).

Belongs to the universal ribosomal protein uL15 family. As to quaternary structure, part of the 50S ribosomal subunit.

Its function is as follows. Binds to the 23S rRNA. This Rickettsia peacockii (strain Rustic) protein is Large ribosomal subunit protein uL15.